The sequence spans 165 residues: Hemolysin, heat labile (165 aa).

The cysteines at positions 151 and 161 are disulfide-linked.

The protein belongs to the TDH hemolysin family. In terms of assembly, homodimer.

Its function is as follows. Bacterial hemolysins are exotoxins that attack blood cell membranes and cause cell rupture by mechanisms not clearly defined. The polypeptide is Hemolysin, heat labile (Grimontia hollisae (Vibrio hollisae)).